We begin with the raw amino-acid sequence, 153 residues long: Arginine repressor (153 aa).

This sequence belongs to the ArgR family.

Its subcellular location is the cytoplasm. Its pathway is amino-acid biosynthesis; L-arginine biosynthesis [regulation]. Regulates arginine biosynthesis genes. This chain is Arginine repressor, found in Actinobacillus pleuropneumoniae serotype 5b (strain L20).